The following is a 257-amino-acid chain: Probable enoyl-CoA hydratase echA8 (257 aa).

Belongs to the enoyl-CoA hydratase/isomerase family.

It carries out the reaction a (3S)-3-hydroxyacyl-CoA = a (2E)-enoyl-CoA + H2O. The enzyme catalyses a 4-saturated-(3S)-3-hydroxyacyl-CoA = a (3E)-enoyl-CoA + H2O. In terms of biological role, could possibly oxidize fatty acids using specific components. The polypeptide is Probable enoyl-CoA hydratase echA8 (echA8) (Mycobacterium tuberculosis (strain CDC 1551 / Oshkosh)).